The following is a 157-amino-acid chain: Probable succinate transporter subunit YjjB (157 aa).

Transmembrane regions (helical) follow at residues 8–28 (LALA…AMVF), 50–70 (MILM…SMLG), 87–107 (VFTV…TAMI), and 129–149 (FLTA…PGLW).

The protein belongs to the ThrE exporter (TC 2.A.79) family. The transporter is composed of YjjB and YjjP.

The protein resides in the cell inner membrane. Its function is as follows. Involved in succinate export with YjjP. Both proteins are required for export. The polypeptide is Probable succinate transporter subunit YjjB (Escherichia coli O157:H7 (strain EC4115 / EHEC)).